A 581-amino-acid polypeptide reads, in one-letter code: Protein LYRIC (581 aa).

The Lumenal portion of the chain corresponds to 1 to 49 (MAARSWQDELAQQAEEGSARLRELLSVGLGFLRTELGLDLGLEPKRYPS). The tract at residues 1–71 (MAARSWQDEL…LLLFLLGYGW (71 aa)) is activation of NF-kappa-B. A helical membrane pass occupies residues 50-70 (WVILVGTGALGLLLLFLLGYG). Over 71 to 581 (WAAACAGARK…KKKKKARRET (511 aa)) the chain is Cytoplasmic. An interaction with BCCIP region spans residues 72–168 (AAACAGARKK…EKSKKNKKKS (97 aa)). Residues 77-221 (GARKKRRSPP…DSGSLDSTIP (145 aa)) form a disordered region. An interaction with RELA region spans residues 100 to 204 (EDPAQLKNLR…ISHREKRQQR (105 aa)). A compositionally biased stretch (basic and acidic residues) spans 108-126 (LRSEEQKKKNRKKLPEKPK). Threonine 142 bears the Phosphothreonine mark. Over residues 159–168 (EKSKKNKKKS) the composition is skewed to basic residues. Serine 179 bears the Phosphoserine mark. The segment covering 197–207 (HREKRQQRKRD) has biased composition (basic residues). 2 positions are modified to phosphoserine: serine 215 and serine 250. Lysine 263 bears the N6-acetyllysine mark. A disordered region spans residues 280–581 (VNGGGWSEKS…KKKKKARRET (302 aa)). Serine 297, serine 305, and serine 310 each carry phosphoserine. Over residues 318–331 (QSAWTQDPGDTNAN) the composition is skewed to polar residues. A phosphoserine mark is found at serine 343 and serine 368. 2 stretches are compositionally biased toward polar residues: residues 353–371 (EPVS…SRNQ) and 382–393 (NGLSSADPSSDW). Residues 380–442 (GLNGLSSADP…EGALPTGKSK (63 aa)) are lung-homing for mammary tumors. Serine 414 and serine 425 each carry phosphoserine. A compositionally biased stretch (basic and acidic residues) spans 421-433 (DQKDSDDDKEKGE). Residues 440 to 450 (KSKKKKKKKKK) are compositionally biased toward basic residues. Phosphoserine is present on residues serine 456, serine 477, serine 493, and serine 495. Polar residues-rich tracts occupy residues 519-535 (PSVT…SSQV) and 548-567 (NAKQ…NWES). Phosphoserine is present on serine 567. Over residues 570 to 581 (QIKKKKKARRET) the composition is skewed to basic residues.

In terms of assembly, interacts with BCCIP, CREBBP/CBP and RELA/p65. As to expression, widely expressed, with highest levels in liver, kidney, prostate and small intestine. Not detected in endothelial cells.

It localises to the endoplasmic reticulum membrane. The protein resides in the nucleus membrane. The protein localises to the cell junction. Its subcellular location is the tight junction. It is found in the nucleus. It localises to the nucleolus. The protein resides in the cytoplasm. The protein localises to the perinuclear region. In terms of biological role, down-regulates SLC1A2/EAAT2 promoter activity when expressed ectopically. Activates the nuclear factor kappa-B (NF-kappa-B) transcription factor. Promotes anchorage-independent growth of immortalized melanocytes and astrocytes which is a key component in tumor cell expansion. Promotes lung metastasis and also has an effect on bone and brain metastasis, possibly by enhancing the seeding of tumor cells to the target organ endothelium. Induces chemoresistance. The protein is Protein LYRIC (Mtdh) of Rattus norvegicus (Rat).